Consider the following 207-residue polypeptide: Large ribosomal subunit protein bL25 (207 aa).

It belongs to the bacterial ribosomal protein bL25 family. CTC subfamily. In terms of assembly, part of the 50S ribosomal subunit; part of the 5S rRNA/L5/L18/L25 subcomplex. Contacts the 5S rRNA. Binds to the 5S rRNA independently of L5 and L18.

Its function is as follows. This is one of the proteins that binds to the 5S RNA in the ribosome where it forms part of the central protuberance. The protein is Large ribosomal subunit protein bL25 of Dictyoglomus turgidum (strain DSM 6724 / Z-1310).